Consider the following 307-residue polypeptide: Elongation factor Ts, mitochondrial (307 aa).

The transit peptide at 1-19 (MIFTRLTRFVGHGTGLRLY) directs the protein to the mitochondrion.

It belongs to the EF-Ts family.

The protein localises to the mitochondrion. Functionally, associates with the EF-Tu.GDP complex and induces the exchange of GDP to GTP. It remains bound to the aminoacyl-tRNA.EF-Tu.GTP complex up to the GTP hydrolysis stage on the ribosome. This is Elongation factor Ts, mitochondrial from Aedes aegypti (Yellowfever mosquito).